The following is a 125-amino-acid chain: MADLQKIVDDLSSLTVLEAAELAKLLEEKWGVSAAAAVAVAAAPGAAAGGAPAEEKTEFQVVLAAAGDKKIEVIKEVRAITGLGLKEAKDLVEGAPKPLKEGVAKDEAEKIKAALEKAGAKVELK.

It belongs to the bacterial ribosomal protein bL12 family. Homodimer. Part of the ribosomal stalk of the 50S ribosomal subunit. Forms a multimeric L10(L12)X complex, where L10 forms an elongated spine to which 2 to 4 L12 dimers bind in a sequential fashion. Binds GTP-bound translation factors.

Its function is as follows. Forms part of the ribosomal stalk which helps the ribosome interact with GTP-bound translation factors. Is thus essential for accurate translation. The protein is Large ribosomal subunit protein bL12 of Afipia carboxidovorans (strain ATCC 49405 / DSM 1227 / KCTC 32145 / OM5) (Oligotropha carboxidovorans).